We begin with the raw amino-acid sequence, 261 residues long: Triosephosphate isomerase (261 aa).

A substrate-binding site is contributed by 10–12 (NWK). The active-site Electrophile is histidine 100. Catalysis depends on glutamate 172, which acts as the Proton acceptor. Substrate is bound by residues glycine 178, serine 218, and 239 to 240 (GG).

The protein belongs to the triosephosphate isomerase family. In terms of assembly, homodimer.

The protein resides in the cytoplasm. The enzyme catalyses D-glyceraldehyde 3-phosphate = dihydroxyacetone phosphate. Its pathway is carbohydrate biosynthesis; gluconeogenesis. The protein operates within carbohydrate degradation; glycolysis; D-glyceraldehyde 3-phosphate from glycerone phosphate: step 1/1. Functionally, involved in the gluconeogenesis. Catalyzes stereospecifically the conversion of dihydroxyacetone phosphate (DHAP) to D-glyceraldehyde-3-phosphate (G3P). The polypeptide is Triosephosphate isomerase (Mycobacteroides abscessus (strain ATCC 19977 / DSM 44196 / CCUG 20993 / CIP 104536 / JCM 13569 / NCTC 13031 / TMC 1543 / L948) (Mycobacterium abscessus)).